The chain runs to 431 residues: Glucose-6-phosphate isomerase (431 aa).

E284 serves as the catalytic Proton donor. Residues H305 and K420 contribute to the active site.

This sequence belongs to the GPI family.

The protein localises to the cytoplasm. The enzyme catalyses alpha-D-glucose 6-phosphate = beta-D-fructose 6-phosphate. It participates in carbohydrate biosynthesis; gluconeogenesis. It functions in the pathway carbohydrate degradation; glycolysis; D-glyceraldehyde 3-phosphate and glycerone phosphate from D-glucose: step 2/4. Catalyzes the reversible isomerization of glucose-6-phosphate to fructose-6-phosphate. This Mycoplasma genitalium (strain ATCC 33530 / DSM 19775 / NCTC 10195 / G37) (Mycoplasmoides genitalium) protein is Glucose-6-phosphate isomerase.